The sequence spans 284 residues: 2-dehydro-3-deoxyphosphooctonate aldolase (284 aa).

The protein belongs to the KdsA family.

It localises to the cytoplasm. The catalysed reaction is D-arabinose 5-phosphate + phosphoenolpyruvate + H2O = 3-deoxy-alpha-D-manno-2-octulosonate-8-phosphate + phosphate. The protein operates within carbohydrate biosynthesis; 3-deoxy-D-manno-octulosonate biosynthesis; 3-deoxy-D-manno-octulosonate from D-ribulose 5-phosphate: step 2/3. It participates in bacterial outer membrane biogenesis; lipopolysaccharide biosynthesis. The chain is 2-dehydro-3-deoxyphosphooctonate aldolase from Proteus mirabilis (strain HI4320).